We begin with the raw amino-acid sequence, 183 residues long: Oligoribonuclease (183 aa).

Residues 10-173 enclose the Exonuclease domain; sequence LIWIDLEMTG…ADIRESIAEL (164 aa). Y131 is a catalytic residue.

Belongs to the oligoribonuclease family.

It localises to the cytoplasm. Its function is as follows. 3'-to-5' exoribonuclease specific for small oligoribonucleotides. The sequence is that of Oligoribonuclease from Idiomarina loihiensis (strain ATCC BAA-735 / DSM 15497 / L2-TR).